The sequence spans 298 residues: Mitochondrial 2-oxodicarboxylate carrier (298 aa).

3 Solcar repeats span residues His-10–Phe-99, Ser-106–Asn-195, and Leu-204–Trp-293. 6 helical membrane passes run Val-16–Val-36, Phe-69–Val-88, Pro-112–Val-132, Gly-166–Phe-186, Leu-204–Asn-224, and Leu-276–Glu-296.

Belongs to the mitochondrial carrier (TC 2.A.29) family. In terms of tissue distribution, widely expressed.

Its subcellular location is the mitochondrion inner membrane. It carries out the reaction 2-oxoadipate(in) + 2-oxoglutarate(out) = 2-oxoadipate(out) + 2-oxoglutarate(in). The enzyme catalyses hexanedioate(in) + 2-oxoglutarate(out) = hexanedioate(out) + 2-oxoglutarate(in). The catalysed reaction is L-2-aminoadipate(in) + 2-oxoglutarate(out) = L-2-aminoadipate(out) + 2-oxoglutarate(in). It catalyses the reaction glutarate(in) + 2-oxoglutarate(out) = glutarate(out) + 2-oxoglutarate(in). It carries out the reaction 2-oxoheptanedioate(in) + 2-oxoglutarate(out) = 2-oxoheptanedioate(out) + 2-oxoglutarate(in). The enzyme catalyses heptanedioate(in) + 2-oxoglutarate(out) = heptanedioate(out) + 2-oxoglutarate(in). The catalysed reaction is citrate(in) + 2-oxoglutarate(out) = citrate(out) + 2-oxoglutarate(in). Its function is as follows. Transports dicarboxylates across the inner membranes of mitochondria by a counter-exchange mechanism. Can transport 2-oxoadipate (2-oxohexanedioate), 2-oxoglutarate, adipate (hexanedioate), glutarate, and to a lesser extent, pimelate (heptanedioate), 2-oxopimelate (2-oxoheptanedioate), 2-aminoadipate (2-aminohexanedioate), oxaloacetate, and citrate. Plays a central role in catabolism of lysine, hydroxylysine, and tryptophan, by transporting common metabolite intermediates (such as 2-oxoadipate) into the mitochondria, where it is converted into acetyl-CoA and can enter the citric acid (TCA) cycle. The sequence is that of Mitochondrial 2-oxodicarboxylate carrier (Slc25a21) from Rattus norvegicus (Rat).